The following is a 186-amino-acid chain: Ribosome-recycling factor (186 aa).

This sequence belongs to the RRF family.

The protein resides in the cytoplasm. Functionally, responsible for the release of ribosomes from messenger RNA at the termination of protein biosynthesis. May increase the efficiency of translation by recycling ribosomes from one round of translation to another. In Cytophaga hutchinsonii (strain ATCC 33406 / DSM 1761 / CIP 103989 / NBRC 15051 / NCIMB 9469 / D465), this protein is Ribosome-recycling factor.